A 389-amino-acid polypeptide reads, in one-letter code: S-adenosylmethionine synthase (389 aa).

ATP is bound at residue H15. D17 is a Mg(2+) binding site. K(+) is bound at residue E43. L-methionine-binding residues include E56 and Q99. Residues 99–109 (QSPDIAQGVNE) form a flexible loop region. ATP-binding positions include 166-168 (DAK), 234-235 (RF), D243, 249-250 (RK), A266, and K270. D243 lines the L-methionine pocket. K274 is a binding site for L-methionine.

It belongs to the AdoMet synthase family. As to quaternary structure, homotetramer; dimer of dimers. Mg(2+) is required as a cofactor. It depends on K(+) as a cofactor.

Its subcellular location is the cytoplasm. The catalysed reaction is L-methionine + ATP + H2O = S-adenosyl-L-methionine + phosphate + diphosphate. It participates in amino-acid biosynthesis; S-adenosyl-L-methionine biosynthesis; S-adenosyl-L-methionine from L-methionine: step 1/1. Its function is as follows. Catalyzes the formation of S-adenosylmethionine (AdoMet) from methionine and ATP. The overall synthetic reaction is composed of two sequential steps, AdoMet formation and the subsequent tripolyphosphate hydrolysis which occurs prior to release of AdoMet from the enzyme. The chain is S-adenosylmethionine synthase from Laribacter hongkongensis (strain HLHK9).